The chain runs to 456 residues: Asparagine--tRNA ligase (456 aa).

It belongs to the class-II aminoacyl-tRNA synthetase family. As to quaternary structure, homodimer.

The protein localises to the cytoplasm. It carries out the reaction tRNA(Asn) + L-asparagine + ATP = L-asparaginyl-tRNA(Asn) + AMP + diphosphate + H(+). The polypeptide is Asparagine--tRNA ligase (Mycoplasma genitalium (strain ATCC 33530 / DSM 19775 / NCTC 10195 / G37) (Mycoplasmoides genitalium)).